The chain runs to 469 residues: MPREIITIQVGQCGNQIGMEFWKQLCLEHGIGKDGLLEDFATQGGDRKDVFFYQADDQHFIPRSLLIDLEPRVINGIQNSEYRNLYNHENIFVAEHGGGAGNNWASGYHQGEQVVDDIMDMVDREADGSDSLEGFVLCHSIAGGTGSGMGSYLLETLNDRYSKKLVQTYSVFPNQMETSDVVVQPYNSLLTLKRLTLNADCVVVLDNTALNRIAVERLHLSNPTFAQTNSLVSTVMSASTTTLRYPGYMNNDLVGLLASLIPTPRCHFLMTGYTPLTVERQVNMIRKTTVLDVMRRLLQTKNVMVSSYARTKEASQAKYISILNIIQGEVDPTQVHESLQRIRERKLVNFIDWAPASIQVALSRKSPYVQTTHRVSGLMLANHTSIRHLFGKCLGQYEKLRKKQAFLDNYRKFPMFADNDLSEFDESREIIESLVDEYKACESPDYIKWGMEDPGEANVAADLDSKLVV.

Ala-142–Gly-148 contributes to the GTP binding site.

Belongs to the tubulin family.

It localises to the cytoplasm. It is found in the cytoskeleton. Its subcellular location is the microtubule organizing center. Its function is as follows. Tubulin is the major constituent of microtubules. The gamma chain is found at microtubule organizing centers (MTOC) such as the spindle poles, suggesting that it is involved in the minus-end nucleation of microtubule assembly. This chain is Tubulin gamma-2 chain (TUBG2), found in Zea mays (Maize).